The primary structure comprises 283 residues: MQIIDGKSVSAKVKEYVKNEAISLKKSGITPTLAVILVGEDKASQTYVASKEKACLACEMGSVMHRLSKETSQSELLALIEVLNLDDSIDGILVQLPLPKHIDTNRVLEAIDPTKDVDGFHAVNVGKLSSGLDGFVPCTPLGIMELLKEYDVNLQGIDAVVIGRSNIVGKPMASLLLNAGATISIAHSKTKNLPEITRRAKLVVVAVGRPNFLNADMVSDGAIVIDVGINRLDSGKLVGDVDFDSVAPKCSLITPVPGGVGPMTIAMLLSNTLKSAKNRKRNV.

NADP(+)-binding positions include 163-165 (GRS), S188, and I229.

The protein belongs to the tetrahydrofolate dehydrogenase/cyclohydrolase family. As to quaternary structure, homodimer.

It carries out the reaction (6R)-5,10-methylene-5,6,7,8-tetrahydrofolate + NADP(+) = (6R)-5,10-methenyltetrahydrofolate + NADPH. The catalysed reaction is (6R)-5,10-methenyltetrahydrofolate + H2O = (6R)-10-formyltetrahydrofolate + H(+). It participates in one-carbon metabolism; tetrahydrofolate interconversion. In terms of biological role, catalyzes the oxidation of 5,10-methylenetetrahydrofolate to 5,10-methenyltetrahydrofolate and then the hydrolysis of 5,10-methenyltetrahydrofolate to 10-formyltetrahydrofolate. The chain is Bifunctional protein FolD from Campylobacter fetus subsp. fetus (strain 82-40).